The sequence spans 183 residues: ATP synthase subunit b, chloroplastic (183 aa).

The helical transmembrane segment at 25–45 threads the bilayer; the sequence is DILATNLINLTVVVGVLIFFG.

This sequence belongs to the ATPase B chain family. F-type ATPases have 2 components, F(1) - the catalytic core - and F(0) - the membrane proton channel. F(1) has five subunits: alpha(3), beta(3), gamma(1), delta(1), epsilon(1). F(0) has four main subunits: a(1), b(1), b'(1) and c(10-14). The alpha and beta chains form an alternating ring which encloses part of the gamma chain. F(1) is attached to F(0) by a central stalk formed by the gamma and epsilon chains, while a peripheral stalk is formed by the delta, b and b' chains.

The protein resides in the plastid. It is found in the chloroplast thylakoid membrane. Functionally, f(1)F(0) ATP synthase produces ATP from ADP in the presence of a proton or sodium gradient. F-type ATPases consist of two structural domains, F(1) containing the extramembraneous catalytic core and F(0) containing the membrane proton channel, linked together by a central stalk and a peripheral stalk. During catalysis, ATP synthesis in the catalytic domain of F(1) is coupled via a rotary mechanism of the central stalk subunits to proton translocation. Its function is as follows. Component of the F(0) channel, it forms part of the peripheral stalk, linking F(1) to F(0). The sequence is that of ATP synthase subunit b, chloroplastic from Saccharum hybrid (Sugarcane).